A 277-amino-acid chain; its full sequence is Ribosomal RNA small subunit methyltransferase A (277 aa).

S-adenosyl-L-methionine-binding residues include Asn-20, Leu-22, Gly-47, Glu-68, Asp-93, and Asn-114.

It belongs to the class I-like SAM-binding methyltransferase superfamily. rRNA adenine N(6)-methyltransferase family. RsmA subfamily.

It localises to the cytoplasm. The enzyme catalyses adenosine(1518)/adenosine(1519) in 16S rRNA + 4 S-adenosyl-L-methionine = N(6)-dimethyladenosine(1518)/N(6)-dimethyladenosine(1519) in 16S rRNA + 4 S-adenosyl-L-homocysteine + 4 H(+). In terms of biological role, specifically dimethylates two adjacent adenosines (A1518 and A1519) in the loop of a conserved hairpin near the 3'-end of 16S rRNA in the 30S particle. May play a critical role in biogenesis of 30S subunits. The polypeptide is Ribosomal RNA small subunit methyltransferase A (Aliivibrio salmonicida (strain LFI1238) (Vibrio salmonicida (strain LFI1238))).